The following is a 209-amino-acid chain: ATP-dependent Clp protease proteolytic subunit (209 aa).

Catalysis depends on S103, which acts as the Nucleophile. The active site involves H128.

This sequence belongs to the peptidase S14 family. In terms of assembly, fourteen ClpP subunits assemble into 2 heptameric rings which stack back to back to give a disk-like structure with a central cavity, resembling the structure of eukaryotic proteasomes.

It localises to the cytoplasm. It catalyses the reaction Hydrolysis of proteins to small peptides in the presence of ATP and magnesium. alpha-casein is the usual test substrate. In the absence of ATP, only oligopeptides shorter than five residues are hydrolyzed (such as succinyl-Leu-Tyr-|-NHMec, and Leu-Tyr-Leu-|-Tyr-Trp, in which cleavage of the -Tyr-|-Leu- and -Tyr-|-Trp bonds also occurs).. Its function is as follows. Cleaves peptides in various proteins in a process that requires ATP hydrolysis. Has a chymotrypsin-like activity. Plays a major role in the degradation of misfolded proteins. The sequence is that of ATP-dependent Clp protease proteolytic subunit from Lawsonia intracellularis (strain PHE/MN1-00).